A 476-amino-acid chain; its full sequence is tRNA-2-methylthio-N(6)-dimethylallyladenosine synthase (476 aa).

Residues 1 to 14 are compositionally biased toward basic and acidic residues; the sequence is MTEVVHLHMPEEAR. The segment at 1-20 is disordered; that stretch reads MTEVVHLHMPEEARATQSRD. Residues 26–147 form the MTTase N-terminal domain; sequence RRYYVWTVGC…APNPIYQLEE (122 aa). Residues Cys-35, Cys-71, Cys-105, Cys-170, Cys-174, and Cys-177 each coordinate [4Fe-4S] cluster. The Radical SAM core domain occupies 156–390; sequence DHPPVSVHVP…ERLQEQIAAE (235 aa). A TRAM domain is found at 393–453; that stretch reads ARFLHQTVEV…PWSLQGVLAR (61 aa).

Belongs to the methylthiotransferase family. MiaB subfamily. Monomer. [4Fe-4S] cluster serves as cofactor.

It localises to the cytoplasm. It carries out the reaction N(6)-dimethylallyladenosine(37) in tRNA + (sulfur carrier)-SH + AH2 + 2 S-adenosyl-L-methionine = 2-methylsulfanyl-N(6)-dimethylallyladenosine(37) in tRNA + (sulfur carrier)-H + 5'-deoxyadenosine + L-methionine + A + S-adenosyl-L-homocysteine + 2 H(+). Its function is as follows. Catalyzes the methylthiolation of N6-(dimethylallyl)adenosine (i(6)A), leading to the formation of 2-methylthio-N6-(dimethylallyl)adenosine (ms(2)i(6)A) at position 37 in tRNAs that read codons beginning with uridine. This Roseiflexus sp. (strain RS-1) protein is tRNA-2-methylthio-N(6)-dimethylallyladenosine synthase.